Here is a 65-residue protein sequence, read N- to C-terminus: Large ribosomal subunit protein bL35 (65 aa).

This sequence belongs to the bacterial ribosomal protein bL35 family.

This is Large ribosomal subunit protein bL35 from Syntrophobacter fumaroxidans (strain DSM 10017 / MPOB).